The primary structure comprises 302 residues: Sulfate adenylyltransferase subunit 2 (302 aa).

This sequence belongs to the PAPS reductase family. CysD subfamily. Heterodimer composed of CysD, the smaller subunit, and CysN.

It catalyses the reaction sulfate + ATP + H(+) = adenosine 5'-phosphosulfate + diphosphate. It participates in sulfur metabolism; hydrogen sulfide biosynthesis; sulfite from sulfate: step 1/3. With CysN forms the ATP sulfurylase (ATPS) that catalyzes the adenylation of sulfate producing adenosine 5'-phosphosulfate (APS) and diphosphate, the first enzymatic step in sulfur assimilation pathway. APS synthesis involves the formation of a high-energy phosphoric-sulfuric acid anhydride bond driven by GTP hydrolysis by CysN coupled to ATP hydrolysis by CysD. The chain is Sulfate adenylyltransferase subunit 2 from Citrobacter koseri (strain ATCC BAA-895 / CDC 4225-83 / SGSC4696).